Consider the following 792-residue polypeptide: Phenylalanine--tRNA ligase beta subunit (792 aa).

The tRNA-binding domain occupies 39 to 147 (GESLGQVVVA…DDAPVGQALA (109 aa)). The region spanning 400-475 (PQPARILLRR…RIHGYDRVPT (76 aa)) is the B5 domain. Residues aspartate 453, aspartate 459, glutamate 462, and aspartate 463 each coordinate Mg(2+). The FDX-ACB domain maps to 698–791 (SRFPSVRRDL…IEREHRARIR (94 aa)).

The protein belongs to the phenylalanyl-tRNA synthetase beta subunit family. Type 1 subfamily. As to quaternary structure, tetramer of two alpha and two beta subunits. Mg(2+) is required as a cofactor.

It is found in the cytoplasm. The catalysed reaction is tRNA(Phe) + L-phenylalanine + ATP = L-phenylalanyl-tRNA(Phe) + AMP + diphosphate + H(+). This is Phenylalanine--tRNA ligase beta subunit from Xanthomonas oryzae pv. oryzae (strain KACC10331 / KXO85).